A 58-amino-acid polypeptide reads, in one-letter code: Large ribosomal subunit protein eL24 (58 aa).

Residues C6, C9, C32, and C36 each contribute to the Zn(2+) site. The segment at C6–C36 adopts a C4-type zinc-finger fold.

The protein belongs to the eukaryotic ribosomal protein eL24 family. As to quaternary structure, part of the 50S ribosomal subunit. Forms a cluster with proteins L3 and L14. Zn(2+) serves as cofactor.

Functionally, binds to the 23S rRNA. In Pyrobaculum islandicum (strain DSM 4184 / JCM 9189 / GEO3), this protein is Large ribosomal subunit protein eL24.